We begin with the raw amino-acid sequence, 69 residues long: uncharacterized protein (69 aa).

The signal sequence occupies residues 1–19 (MKRIWVSLMIAITACSAHA).

This is an uncharacterized protein from Pasteurella multocida (strain Pm70).